The primary structure comprises 193 residues: Dirigent protein (193 aa).

The first 29 residues, 1–29 (MGGEKAFSFIFLLFLCFFLANLSASSAHP), serve as a signal peptide directing secretion. Cysteine 40 and cysteine 192 are disulfide-bonded. 2 N-linked (GlcNAc...) asparagine glycosylation sites follow: asparagine 59 and asparagine 129.

Belongs to the plant dirigent protein family. Homodimer. Expressed in rhizomes, stems, and leaves.

It localises to the secreted. The protein resides in the extracellular space. It is found in the apoplast. The protein operates within aromatic compound metabolism; phenylpropanoid biosynthesis. Its function is as follows. Dirigent proteins impart stereoselectivity on the phenoxy radical-coupling reaction, yielding optically active lignans from two molecules of coniferyl alcohol in the biosynthesis of lignans, flavonolignans, and alkaloids and thus plays a central role in plant secondary metabolism. Also involved in the biosynthesis of etoposide, a chemotherapeutic compound of the topoisomerase inhibitor family. This chain is Dirigent protein, found in Sinopodophyllum hexandrum (Himalayan may apple).